A 272-amino-acid polypeptide reads, in one-letter code: Putative pyruvate, phosphate dikinase regulatory protein (272 aa).

ADP is bound at residue 151–158 (GISRTSKT).

This sequence belongs to the pyruvate, phosphate/water dikinase regulatory protein family. PDRP subfamily.

It carries out the reaction N(tele)-phospho-L-histidyl/L-threonyl-[pyruvate, phosphate dikinase] + ADP = N(tele)-phospho-L-histidyl/O-phospho-L-threonyl-[pyruvate, phosphate dikinase] + AMP + H(+). The enzyme catalyses N(tele)-phospho-L-histidyl/O-phospho-L-threonyl-[pyruvate, phosphate dikinase] + phosphate + H(+) = N(tele)-phospho-L-histidyl/L-threonyl-[pyruvate, phosphate dikinase] + diphosphate. Its function is as follows. Bifunctional serine/threonine kinase and phosphorylase involved in the regulation of the pyruvate, phosphate dikinase (PPDK) by catalyzing its phosphorylation/dephosphorylation. The sequence is that of Putative pyruvate, phosphate dikinase regulatory protein from Staphylococcus aureus (strain USA300).